The sequence spans 304 residues: GTPase Era (304 aa).

In terms of domain architecture, Era-type G spans 11 to 179 (YCGFIAIVGR…QKIVRKSLRE (169 aa)). The interval 19–26 (GRPNVGKS) is G1. 19-26 (GRPNVGKS) lines the GTP pocket. Residues 45-49 (QTTRH) are G2. A G3 region spans residues 66 to 69 (DTPG). Residues 66 to 70 (DTPGL) and 128 to 131 (NKVD) each bind GTP. A G4 region spans residues 128–131 (NKVD). A G5 region spans residues 158–160 (ISA). Residues 210–287 (TGEELPYSVT…HLELWVKVKA (78 aa)) form the KH type-2 domain.

Belongs to the TRAFAC class TrmE-Era-EngA-EngB-Septin-like GTPase superfamily. Era GTPase family. As to quaternary structure, monomer.

The protein localises to the cytoplasm. Its subcellular location is the cell inner membrane. An essential GTPase that binds both GDP and GTP, with rapid nucleotide exchange. Plays a role in 16S rRNA processing and 30S ribosomal subunit biogenesis and possibly also in cell cycle regulation and energy metabolism. This is GTPase Era from Actinobacillus pleuropneumoniae serotype 3 (strain JL03).